Here is a 394-residue protein sequence, read N- to C-terminus: Quinolinate synthase (394 aa).

Positions 57 and 74 each coordinate iminosuccinate. Position 121 (Cys121) interacts with [4Fe-4S] cluster. Residues 153-155 (YMN) and Ser174 each bind iminosuccinate. Cys243 is a [4Fe-4S] cluster binding site. Residues 269–271 (HPE) and Thr286 contribute to the iminosuccinate site. A [4Fe-4S] cluster-binding site is contributed by Cys333.

This sequence belongs to the quinolinate synthase family. Type 3 subfamily. [4Fe-4S] cluster serves as cofactor.

The protein resides in the cytoplasm. The enzyme catalyses iminosuccinate + dihydroxyacetone phosphate = quinolinate + phosphate + 2 H2O + H(+). It participates in cofactor biosynthesis; NAD(+) biosynthesis; quinolinate from iminoaspartate: step 1/1. Its function is as follows. Catalyzes the condensation of iminoaspartate with dihydroxyacetone phosphate to form quinolinate. This Corynebacterium glutamicum (strain ATCC 13032 / DSM 20300 / JCM 1318 / BCRC 11384 / CCUG 27702 / LMG 3730 / NBRC 12168 / NCIMB 10025 / NRRL B-2784 / 534) protein is Quinolinate synthase.